Here is a 437-residue protein sequence, read N- to C-terminus: Xylose isomerase (437 aa).

Active-site residues include histidine 101 and aspartate 104. Mg(2+) contacts are provided by glutamate 232, glutamate 268, histidine 271, aspartate 296, aspartate 307, aspartate 309, and aspartate 339.

Belongs to the xylose isomerase family. In terms of assembly, homotetramer. It depends on Mg(2+) as a cofactor.

The protein resides in the cytoplasm. It catalyses the reaction alpha-D-xylose = alpha-D-xylulofuranose. This Mannheimia succiniciproducens (strain KCTC 0769BP / MBEL55E) protein is Xylose isomerase.